We begin with the raw amino-acid sequence, 148 residues long: Receptor activity-modifying protein 1 (148 aa).

Positions 1–26 (MAPGLRGLPRRGLWLLLAHHLFMVTA) are cleaved as a signal peptide. Disulfide bonds link Cys-27/Cys-82, Cys-40/Cys-72, and Cys-57/Cys-104. Topologically, residues 27-118 (CRDPDYGTLI…RALRDPPNSI (92 aa)) are extracellular. A helical transmembrane segment spans residues 119-140 (LCPFIVLPITVTLLMTALVVWR). Residues 141 to 148 (SKRTEGIV) are Cytoplasmic-facing.

It belongs to the RAMP family. As to quaternary structure, heterodimer of CALCRL and RAMP1; the interaction induces allosteric modulation of CALCRL function and CGRP1/CALCA and CGRP2/CALCB ligand specificity. Heterodimer of CALCR and RAMP1; interaction forms the AMYR1 receptor complex for amylin/IAPP and CGRP1/CALCA ligands.

It localises to the cell membrane. In terms of biological role, accessory protein that interacts with and modulates the function of G-protein coupled receptors including calcitonin gene-related peptide type 1 receptor (CALCRL) and calcitonin receptor (CALCR). Required for the transport of CALCRL to the plasma membrane. Together with CALCRL, form the receptor complex for the calcitonin gene-related peptides CGRP1/CALCA and CGRP2/CALCB. Together with CALCR, form the AMYR1 receptor complex for amylin/IAPP and CGRP1/CALCA. The chain is Receptor activity-modifying protein 1 from Rattus norvegicus (Rat).